The chain runs to 708 residues: Ubiquitin thioesterase ZRANB1 (708 aa).

A RanBP2-type 1 zinc finger spans residues Glu3–Ser33. 4 residues coordinate Zn(2+): Cys10, Cys13, Cys24, and Cys27. Residues Thr38–Arg73 form a disordered region. 2 consecutive RanBP2-type zinc fingers follow at residues Asn84 to Thr113 and Arg149 to Asn178. 8 residues coordinate Zn(2+): Cys90, Cys93, Cys104, Cys107, Cys155, Cys158, Cys169, and Cys172. The segment at Arg200–Asp223 is disordered. The segment covering Ser206–Ser216 has biased composition (polar residues). 2 ANK repeats span residues Lys260 to Asp290 and Tyr313 to Ala340. An OTU domain is found at Leu432–Met592. The active-site Nucleophile is the Cys443. The Proton acceptor role is filled by His585.

This sequence belongs to the peptidase C64 family. In terms of assembly, interacts with TRAF6. Interacts with APC.

It is found in the cytoplasm. The protein localises to the nucleus. It carries out the reaction Thiol-dependent hydrolysis of ester, thioester, amide, peptide and isopeptide bonds formed by the C-terminal Gly of ubiquitin (a 76-residue protein attached to proteins as an intracellular targeting signal).. Ubiquitin thioesterase, which specifically hydrolyzes 'Lys-29'-linked and 'Lys-33'-linked diubiquitin. Also cleaves 'Lys-63'-linked chains, but with 40-fold less efficiency compared to 'Lys-29'-linked ones. Positive regulator of the Wnt signaling pathway that deubiquitinates APC protein, a negative regulator of Wnt-mediated transcription. Acts as a regulator of autophagy by mediating deubiquitination of PIK3C3/VPS34, thereby promoting autophagosome maturation. Plays a role in the regulation of cell morphology and cytoskeletal organization. Required in the stress fiber dynamics and cell migration. The chain is Ubiquitin thioesterase ZRANB1 from Bos taurus (Bovine).